The primary structure comprises 524 residues: Probable pectinesterase/pectinesterase inhibitor 19 (524 aa).

Positions 1-22 (MLVKVFSFFILMITMVVIGVSK) are cleaved as a signal peptide. Positions 23-172 (EYCDDKQSCQ…ISRARIALAL (150 aa)) are pectinesterase inhibitor 19. The segment at 215 to 510 (DVVVAKDGTG…FTVAKLLDGE (296 aa)) is pectinesterase 19. Asparagine 265 and asparagine 281 each carry an N-linked (GlcNAc...) asparagine glycan. Threonine 290 contributes to the substrate binding site. Aspartate 343 functions as the Proton donor; for pectinesterase activity in the catalytic mechanism. Cysteine 357 and cysteine 377 form a disulfide bridge. The active-site Nucleophile; for pectinesterase activity is aspartate 364. N-linked (GlcNAc...) asparagine glycosylation is present at asparagine 412. Arginine 430 and tryptophan 432 together coordinate substrate.

In the N-terminal section; belongs to the PMEI family. The protein in the C-terminal section; belongs to the pectinesterase family. As to expression, expressed in siliques, but not in flower buds.

The protein localises to the secreted. Its subcellular location is the cell wall. It carries out the reaction [(1-&gt;4)-alpha-D-galacturonosyl methyl ester](n) + n H2O = [(1-&gt;4)-alpha-D-galacturonosyl](n) + n methanol + n H(+). The protein operates within glycan metabolism; pectin degradation; 2-dehydro-3-deoxy-D-gluconate from pectin: step 1/5. Functionally, acts in the modification of cell walls via demethylesterification of cell wall pectin. The protein is Probable pectinesterase/pectinesterase inhibitor 19 (PME19) of Arabidopsis thaliana (Mouse-ear cress).